Reading from the N-terminus, the 43-residue chain is Protein PsbN (43 aa).

Residues 4-24 (AIVLSISMAAVVVAITGISIY) form a helical membrane-spanning segment.

It belongs to the PsbN family.

Its subcellular location is the cellular thylakoid membrane. May play a role in photosystem I and II biogenesis. The sequence is that of Protein PsbN from Nostoc punctiforme (strain ATCC 29133 / PCC 73102).